Here is a 312-residue protein sequence, read N- to C-terminus: DNA-directed RNA polymerase subunit alpha (312 aa).

The interval 1–226 (MIEFEKPIIT…EHLNLFTDLT (226 aa)) is alpha N-terminal domain (alpha-NTD). The tract at residues 243–312 (DEKVLDRTIE…DLGLGLKNDK (70 aa)) is alpha C-terminal domain (alpha-CTD).

Belongs to the RNA polymerase alpha chain family. Homodimer. The RNAP catalytic core consists of 2 alpha, 1 beta, 1 beta' and 1 omega subunit. When a sigma factor is associated with the core the holoenzyme is formed, which can initiate transcription.

The enzyme catalyses RNA(n) + a ribonucleoside 5'-triphosphate = RNA(n+1) + diphosphate. DNA-dependent RNA polymerase catalyzes the transcription of DNA into RNA using the four ribonucleoside triphosphates as substrates. This is DNA-directed RNA polymerase subunit alpha from Streptococcus mutans serotype c (strain ATCC 700610 / UA159).